Here is a 260-residue protein sequence, read N- to C-terminus: Homeobox-leucine zipper protein HOX25 (260 aa).

The segment covering 1 to 10 has biased composition (acidic residues); that stretch reads MEDLVDELYG. Disordered regions lie at residues 1-24, 121-145, and 190-221; these read MEDL…ARKR, ANGK…PESA, and SPES…YPSS. A DNA-binding region (homeobox) is located at residues 19–79; it reads AAARKRRLTA…NRRARWKTKQ (61 aa). The leucine-zipper stretch occupies residues 78-122; it reads KQLELDFDRLRAAHDELLAGRAALAADNESLRSQVILLTEKLQAN. Residues 205–218 show a composition bias toward acidic residues; that stretch reads SEDDCGGAGSDDDY.

The protein belongs to the HD-ZIP homeobox family. Class I subfamily. As to expression, expressed in roots, leaf sheaths and blades and panicles.

The protein localises to the nucleus. Functionally, probable transcription factor. This chain is Homeobox-leucine zipper protein HOX25 (HOX25), found in Oryza sativa subsp. indica (Rice).